Here is a 79-residue protein sequence, read N- to C-terminus: Protein Vpu (79 aa).

Residues 1–7 lie on the Extracellular side of the membrane; that stretch reads MLLLIKL. The helical transmembrane segment at 8–28 threads the bilayer; it reads GFIGLAIETLIVIVVWAIVYR. Residues 29-79 are Cytoplasmic-facing; it reads IYREVKVEEKISQLRQRIRDRAEDSGNESDGDAEELANLLPPDRIDQDNWV. The segment at 48–79 is disordered; that stretch reads DRAEDSGNESDGDAEELANLLPPDRIDQDNWV. Serine 53 and serine 57 each carry phosphoserine; by host CK2. Residues 53–63 are compositionally biased toward acidic residues; it reads SGNESDGDAEE.

This sequence belongs to the HIV-1 VPU protein family. Homopentamer. Interacts with host CD4 and BRTC; these interactions induce proteasomal degradation of CD4. Interacts with host BST2; this interaction leads to the degradation of host BST2. Interacts with host FBXW11. Interacts with host AP1M1; this interaction plays a role in the mistrafficking and subsequent degradation of host BST2. Interacts with host RANBP2; this interaction allows Vpu to down-regulate host BLM sumoylation. Post-translationally, phosphorylated by host CK2. This phosphorylation is necessary for interaction with human BTRC and degradation of CD4.

It localises to the host membrane. Its activity is regulated as follows. Ion channel activity is inhibited by hexamethylene amiloride in vitro. In terms of biological role, enhances virion budding by targeting host CD4 and Tetherin/BST2 to proteasome degradation. Degradation of CD4 prevents any unwanted premature interactions between viral Env and its host receptor CD4 in the endoplasmic reticulum. Degradation of antiretroviral protein Tetherin/BST2 is important for virion budding, as BST2 tethers new viral particles to the host cell membrane. Mechanistically, Vpu bridges either CD4 or BST2 to BTRC, a substrate recognition subunit of the Skp1/Cullin/F-box protein E3 ubiquitin ligase, induces their ubiquitination and subsequent proteasomal degradation. The alteration of the E3 ligase specificity by Vpu seems to promote the degradation of host IKBKB, leading to NF-kappa-B down-regulation and subsequent apoptosis. Acts as a viroporin that forms an oligomeric ion channel in membranes. Modulates the host DNA repair mechanisms to promote degradation of nuclear viral cDNA in cells that are already productively infected in order to suppress immune sensing and proviral hyper-integration (superinfection). Manipulates PML-NBs and modulates SUMOylation of host BLM protein thereby enhancing its DNA-end processing activity toward viral unintegrated linear DNA. Also inhibits RAD52-mediated homologous repair of viral cDNA, preventing the generation of dead-end circular forms of single copies of the long terminal repeat and permitting sustained nucleolytic attack. The sequence is that of Protein Vpu from Pan troglodytes (Chimpanzee).